Consider the following 199-residue polypeptide: uncharacterized protein (199 aa).

The next 6 helical transmembrane spans lie at 1–21 (MEQFYYYWSMWFLWVLTTFIF), 28–48 (IAVSVFILTNIILSIHDIALY), 51–71 (LNAAYLMFFVCGCVYAGYLGM), 83–103 (LVAAYAFVYLFALYDPVWFII), 127–147 (QLVLFVLGMCQGELVYSFVIQ), and 154–174 (AVGGFQWLNACSAGMILLFGI).

It localises to the cell membrane. This is an uncharacterized protein from Bacillus subtilis (strain 168).